The following is a 416-amino-acid chain: Exodeoxyribonuclease 7 large subunit (416 aa).

This sequence belongs to the XseA family. Heterooligomer composed of large and small subunits.

The protein resides in the cytoplasm. It carries out the reaction Exonucleolytic cleavage in either 5'- to 3'- or 3'- to 5'-direction to yield nucleoside 5'-phosphates.. Bidirectionally degrades single-stranded DNA into large acid-insoluble oligonucleotides, which are then degraded further into small acid-soluble oligonucleotides. This Sulfurimonas denitrificans (strain ATCC 33889 / DSM 1251) (Thiomicrospira denitrificans (strain ATCC 33889 / DSM 1251)) protein is Exodeoxyribonuclease 7 large subunit.